Consider the following 561-residue polypeptide: 2-methylisocitrate lyase, mitochondrial (561 aa).

The tract at residues 154–177 (KAQSMHDRKQWDTRRKMSPDERSK) is disordered. The segment covering 157-177 (SMHDRKQWDTRRKMSPDERSK) has biased composition (basic and acidic residues). The active site involves C228.

It belongs to the isocitrate lyase/PEP mutase superfamily. Isocitrate lyase family. It depends on Mg(2+) as a cofactor.

The protein localises to the mitochondrion matrix. It carries out the reaction (2S,3R)-3-hydroxybutane-1,2,3-tricarboxylate = pyruvate + succinate. It participates in organic acid metabolism; propanoate degradation. Its function is as follows. Component of the methylcitrate cycle that catalyzes the formation of pyruvate and succinate from 2-methylisocitrate during the metabolism of endogenous propionyl-CoA. Plays an important role for growth and development, but also in antagonism, root colonization and induction of defense responses in plants. The polypeptide is 2-methylisocitrate lyase, mitochondrial (Hypocrea atroviridis (strain ATCC 20476 / IMI 206040) (Trichoderma atroviride)).